We begin with the raw amino-acid sequence, 297 residues long: GTP-binding protein REM 1 (297 aa).

The segment covering 1 to 10 (MTLNTQQEAK) has biased composition (polar residues). Residues 1-73 (MTLNTQQEAK…DGWSSESSDS (73 aa)) are disordered. The residue at position 51 (Ser-51) is a Phosphoserine. A compositionally biased stretch (low complexity) spans 64-73 (DGWSSESSDS). Residues 87–94 (GDPGVGKT) and 194–197 (NKAD) each bind GTP. The tract at residues 267–286 (ARRFLARLTARSARRRALKA) is calmodulin-binding.

The protein belongs to the small GTPase superfamily. RGK family. As to quaternary structure, in vitro, interacts with calmodulin in a calcium-dependent manner. Interacts 14-3-3 family members including YWHAE, YWHAH, YWHAQ, YWHAZ in a phosphorylation-dependent manner. As to expression, high expression in cardiac muscle. Moderate expression in lung, skeletal muscle and kidney. Low levels in spleen and brain.

Functionally, promotes endothelial cell sprouting and actin cytoskeletal reorganization. May be involved in angiogenesis. May function in Ca(2+) signaling. The sequence is that of GTP-binding protein REM 1 (Rem1) from Mus musculus (Mouse).